Reading from the N-terminus, the 406-residue chain is Eukaryotic initiation factor 4A-I (406 aa).

The disordered stretch occupies residues 1–21 (MSASQDSRSRDNGPDGMEPEG). N-acetylserine is present on Ser2. Ser4 carries the post-translational modification Phosphoserine. The Q motif signature appears at 32 to 60 (DSLDDMNLSESLLRGIYAYGFEKPSAIQQ). Residues 63 to 234 (ILSCIKGYDV…KKFMRDPIRI (172 aa)) enclose the Helicase ATP-binding domain. Residue 76–83 (AQSGTGKT) coordinates ATP. The residue at position 118 (Lys118) is an N6-acetyllysine. Lys146 participates in a covalent cross-link: Glycyl lysine isopeptide (Lys-Gly) (interchain with G-Cter in SUMO2). The residue at position 158 (Thr158) is a Phosphothreonine. Lys174 bears the N6-acetyllysine mark. The DEAD box motif lies at 182–185 (DEAD). Lys193 bears the N6-acetyllysine mark. Lys225 participates in a covalent cross-link: Glycyl lysine isopeptide (Lys-Gly) (interchain with G-Cter in SUMO2). Lys238 bears the N6-acetyllysine; alternate mark. Lys238 participates in a covalent cross-link: Glycyl lysine isopeptide (Lys-Gly) (interchain with G-Cter in SUMO2); alternate. The Helicase C-terminal domain maps to 245–406 (GIRQFYINVE…EMPLNVADLI (162 aa)). Glycyl lysine isopeptide (Lys-Gly) (interchain with G-Cter in SUMO2) cross-links involve residues Lys309, Lys369, and Lys381.

It belongs to the DEAD box helicase family. eIF4A subfamily. As to quaternary structure, eIF4F is a multi-subunit complex, the composition of which varies with external and internal environmental conditions. It is composed of at least EIF4A, EIF4E and EIF4G1/EIF4G3. Interacts with PAIP1, EIF4E and UPF2. Found in a complex with XPO7, EIF4A1, ARHGAP1, VPS26A, VPS29, VPS35 and SFN. May interact with NOM1. Interacts with PDCD4; this interferes with the interaction between EIF4A and EIF4G. Interacts with RBM4. Interacts with DDX3X in an RNA-independent manner. Interacts with PKP1 (via N-terminus); the interaction promotes EIF4A1 recruitment to the cap-dependent translation complex and EIF4A1 ATPase activity.

It is found in the cytoplasm. The protein resides in the perinuclear region. Its subcellular location is the cell membrane. It localises to the stress granule. It carries out the reaction ATP + H2O = ADP + phosphate + H(+). Its function is as follows. ATP-dependent RNA helicase which is a subunit of the eIF4F complex involved in cap recognition and is required for mRNA binding to ribosome. In the current model of translation initiation, eIF4A unwinds RNA secondary structures in the 5'-UTR of mRNAs which is necessary to allow efficient binding of the small ribosomal subunit, and subsequent scanning for the initiator codon. As a result, promotes cell proliferation and growth. The chain is Eukaryotic initiation factor 4A-I (EIF4A1) from Pongo abelii (Sumatran orangutan).